The chain runs to 3948 residues: Hybrid PKS-NRPS synthetase fsa1 (3948 aa).

One can recognise a Ketosynthase family 3 (KS3) domain in the interval 4–438 (SEPIAVIGSA…GTNAHAIIEA (435 aa)). Active-site for beta-ketoacyl synthase activity residues include cysteine 177, histidine 316, and histidine 358. Residues 543-846 (IFTGQGTQWP…LDTIEAISEG (304 aa)) are malonyl-CoA:ACP transacylase (MAT) domain. The tract at residues 931–1066 (HPLLGRRCHD…AQIKASLGTP (136 aa)) is N-terminal hotdog fold. Residues 931–1233 (HPLLGRRCHD…MELVPFSPAT (303 aa)) are dehydratase (DH) domain. The PKS/mFAS DH domain maps to 931–1235 (HPLLGRRCHD…LVPFSPATPA (305 aa)). Histidine 964 (proton acceptor; for dehydratase activity) is an active-site residue. Residues 1081–1235 (LRPVSVDRFY…LVPFSPATPA (155 aa)) form a C-terminal hotdog fold region. Aspartate 1141 acts as the Proton donor; for dehydratase activity in catalysis. Residues 1381-1578 (YEQGFGLNLV…TTPPVHKILP (198 aa)) form a methyltransferase (MT) domain region. The interval 2105-2277 (TFLLIGLTGE…VAASSIDISS (173 aa)) is ketoreductase (KR) domain. Positions 2389–2464 (AIIKESFIVR…DLVDESLDLL (76 aa)) constitute a Carrier 1 domain. Serine 2424 is subject to O-(pantetheine 4'-phosphoryl)serine. The tract at residues 2475-2555 (EAGNAHPAKP…TDNLTPPRTF (81 aa)) is disordered. Composition is skewed to polar residues over residues 2487–2505 (VIPQTPTRVTPPESSQGTS) and 2513–2528 (GSDSSRSPIDTPLTSW). The segment covering 2529 to 2541 (DRQDLSPPDKSDD) has biased composition (basic and acidic residues). The span at 2542 to 2551 (APNSTDNLTP) shows a compositional bias: polar residues. A condensation (C) domain region spans residues 2547-2976 (DNLTPPRTFP…TQVLLRSYLS (430 aa)). The adenylation (A) (KR) domain stretch occupies residues 3000–3402 (LKVAVDAGKA…PDTFFGTSGT (403 aa)). Residues 3540–3617 (KSLTASEKRL…AMASVLEDCG (78 aa)) form the Carrier 2 domain. Serine 3577 carries the post-translational modification O-(pantetheine 4'-phosphoryl)serine. The reductase (RED) domain stretch occupies residues 3653-3870 (LTGSSGYLGR…MPVNEIVEAI (218 aa)).

The protein in the C-terminal section; belongs to the NRP synthetase family.

The catalysed reaction is L-serine + 7 malonyl-CoA + acetyl-CoA + 2 S-adenosyl-L-methionine + ATP + 8 NADPH + 11 H(+) = (5S)-3-[(2E,6R,8E,10E,12E)-2,6-dimethyltetradeca-2,8,10,12-tetraenoyl]-5-(hydroxymethyl)pyrrolidine-2,4-dione + AMP + 2 S-adenosyl-L-homocysteine + 7 CO2 + diphosphate + 8 NADP(+) + 8 CoA + 6 H2O. Its pathway is mycotoxin biosynthesis. Functionally, hybrid PKS-NRPS synthetase; part of the gene cluster that mediates the biosynthesis of HIV-1 integrase inhibitor equisetin and of fusarisetin A, both trans-fused decalin-containing tetramic acids showing also antimicrobial activity. The PKS module of fsa1 together with the enoylreductase fsa3 catalyze the formation of the polyketide unit which is then conjugated to L-serine by the condensation domain of the fsa1 NRPS module. Activity of the Dieckmann cyclase domain (RED) results in release of the Dieckmann product intermediate. Diels-Alderase fsa2 is involved in endo-selective Diels-Alder cycloaddition to form the decalin ring, leading to the production of N-desmethylequisetin also called trichosetin. Subsequent N-methylation is carried out by fsa4 to give equisetin. The enzymatic gene responsible for the conversion of equisetin to fusarisetin A has not been identified yet and is probably located outside of the fsa cluster. This chain is Hybrid PKS-NRPS synthetase fsa1, found in Fusarium sp. (strain FN080326).